Here is a 329-residue protein sequence, read N- to C-terminus: MAIIGAGPVGLFTVFQAGMLGMSACVIDALSEVGGQCAVLYPEKPIYDIPAYPVTLARDLVNNLKRQADPFKPTYLLGHTAEQVLEEGEHFVVVTDKKVGVRCRAIVIAAGSGGFGPNRPPLDGITEYEDKSVFYHVSDVSRFRGKRVVIAGGGDSAADWAVSLSEVADSVHVIHRRHSFRCAPNTLRNLESLAERGQIKLLVPYQLAGLAGSDGMLNGVIIRNISSKEETRIDADFLLPFFGISAKLGPIANWGLGVESFYIPIDQSTCRTARTRIYAVGDVAHYQGKLKLILVGFSESALACHDIYKVLFPETPLNFQYSTSKKMPC.

FAD-binding residues include aspartate 28, glutamine 36, tyrosine 41, alanine 81, phenylalanine 115, aspartate 282, and threonine 323.

Belongs to the ferredoxin--NADP reductase type 2 family. In terms of assembly, homodimer. FAD serves as cofactor.

It catalyses the reaction 2 reduced [2Fe-2S]-[ferredoxin] + NADP(+) + H(+) = 2 oxidized [2Fe-2S]-[ferredoxin] + NADPH. The chain is Ferredoxin--NADP reductase from Anaplasma marginale (strain St. Maries).